The primary structure comprises 228 residues: Cytochrome c oxidase subunit 2 (228 aa).

The Mitochondrial intermembrane segment spans residues 1–26; the sequence is MSTWANLGLQDSASPLMEQLIFFHDH. The chain crosses the membrane as a helical span at residues 27–48; the sequence is ALLILVMITVLVGYLMFMLFFN. Topologically, residues 49-62 are mitochondrial matrix; it reads NYVNRFLLHGQLIE. The helical transmembrane segment at 63–82 threads the bilayer; the sequence is MIWTILPAIILLFIALPSLR. At 83-228 the chain is on the mitochondrial intermembrane side; that stretch reads LLYLLDEINE…FIKWISSNNS (146 aa). Cu cation contacts are provided by histidine 161, cysteine 196, glutamate 198, cysteine 200, histidine 204, and methionine 207. Glutamate 198 is a binding site for Mg(2+).

It belongs to the cytochrome c oxidase subunit 2 family. In terms of assembly, component of the cytochrome c oxidase (complex IV, CIV), a multisubunit enzyme composed of a catalytic core of 3 subunits and several supernumerary subunits. The complex exists as a monomer or a dimer and forms supercomplexes (SCs) in the inner mitochondrial membrane with ubiquinol-cytochrome c oxidoreductase (cytochrome b-c1 complex, complex III, CIII). Cu cation is required as a cofactor.

The protein resides in the mitochondrion inner membrane. It catalyses the reaction 4 Fe(II)-[cytochrome c] + O2 + 8 H(+)(in) = 4 Fe(III)-[cytochrome c] + 2 H2O + 4 H(+)(out). Its function is as follows. Component of the cytochrome c oxidase, the last enzyme in the mitochondrial electron transport chain which drives oxidative phosphorylation. The respiratory chain contains 3 multisubunit complexes succinate dehydrogenase (complex II, CII), ubiquinol-cytochrome c oxidoreductase (cytochrome b-c1 complex, complex III, CIII) and cytochrome c oxidase (complex IV, CIV), that cooperate to transfer electrons derived from NADH and succinate to molecular oxygen, creating an electrochemical gradient over the inner membrane that drives transmembrane transport and the ATP synthase. Cytochrome c oxidase is the component of the respiratory chain that catalyzes the reduction of oxygen to water. Electrons originating from reduced cytochrome c in the intermembrane space (IMS) are transferred via the dinuclear copper A center (CU(A)) of subunit 2 and heme A of subunit 1 to the active site in subunit 1, a binuclear center (BNC) formed by heme A3 and copper B (CU(B)). The BNC reduces molecular oxygen to 2 water molecules using 4 electrons from cytochrome c in the IMS and 4 protons from the mitochondrial matrix. This is Cytochrome c oxidase subunit 2 (mt:CoII) from Drosophila yakuba (Fruit fly).